A 1634-amino-acid chain; its full sequence is Actin cytoskeleton-regulatory complex protein PAN1 (1634 aa).

The span at 1–11 (MYGYQGTGGQQ) shows a compositional bias: gly residues. Residues 1-215 (MYGYQGTGGQ…QPTGGGNKSV (215 aa)) are disordered. Composition is skewed to low complexity over residues 28–42 (QQQQ…QSQP) and 55–74 (QPTG…TGFQ). Residues 75–93 (SMQPPMQQTGFQSQPNVSM) are compositionally biased toward polar residues. Residues 110–180 (QQTMQTGYQP…SAPAATPAAP (71 aa)) are compositionally biased toward low complexity. The EH 1 domain maps to 233-322 (DQRNFENLFR…ENIKNEVSSM (90 aa)). The EF-hand 1 domain maps to 266-301 (LPPITLSAIWNLADTTRSGALLFPEFAVAMYLCGQA). 2 disordered regions span residues 330–471 (IPDA…QQST) and 492–522 (GYMP…TGKP). Composition is skewed to low complexity over residues 335–359 (SRPS…SSAS) and 368–386 (QPTG…MQQQ). Composition is skewed to polar residues over residues 387–471 (STGY…QQST) and 492–513 (GYMP…SMQP). An EH 2 domain is found at 576 to 665 (EKQIYDGIFM…PELVPPSSKN (90 aa)). The EF-hand 2 domain occupies 609–644 (LNRADLEAIWTLSDPSNKGRLDRDEFAVAMHLIYRH). The disordered stretch occupies residues 711 to 744 (DSDFGYTSRNRRGGSSSTASSNGSSGNDISLSGK). Low complexity predominate over residues 723–737 (GGSSSTASSNGSSGN). Coiled-coil stretches lie at residues 748 to 803 (ISEL…IDVA) and 831 to 859 (DRLP…RLKN). Disordered stretches follow at residues 946–965 (LSSK…QRRR) and 985–1634 (STRS…AVLN). A compositionally biased stretch (low complexity) spans 985-1028 (STRSSRPAPATASSSAPATGSPATAAPISATSTGASTPSAPAAG). Over residues 1029 to 1045 (VDRKAQLKAEAERKMNE) the composition is skewed to basic and acidic residues. The span at 1071–1129 (AEASPAASPAVASPAVASPAATPAVSSPAPVSRGVPAPAAATPATDPATTPAVPVSAPA) shows a compositional bias: low complexity. Residues 1130–1139 (DDSDSDDEEY) show a composition bias toward acidic residues. The stretch at 1131–1198 (DSDSDDEEYE…EAREKAWKES (68 aa)) forms a coiled coil. Over residues 1140 to 1203 (EKLMAQKREQ…AWKESQSKEA (64 aa)) the composition is skewed to basic and acidic residues. Composition is skewed to low complexity over residues 1211-1255 (DVGA…VPAA), 1265-1284 (NNGG…DNNP), and 1293-1304 (PIAAPSPASFSE). The segment covering 1331-1345 (DDDDWGMSSDEDDDQ) has biased composition (acidic residues). Positions 1371 to 1386 (PTGGAPITATPTGSAP) are enriched in low complexity. Residues 1387 to 1396 (AAPPAAPPVA) show a composition bias toward pro residues. The segment covering 1397 to 1413 (PAAVEVAVAASEATPGP) has biased composition (low complexity). Residues 1414-1423 (ESAPPAPPMP) show a composition bias toward pro residues. Low complexity predominate over residues 1424–1442 (EINIPPATEAPSAPAATEA). Positions 1494–1503 (VAAPPPPPPT) are enriched in pro residues. The segment covering 1520–1529 (PGFGAPEAPS) has biased composition (low complexity). Composition is skewed to pro residues over residues 1530–1551 (GIPP…PGPA) and 1559–1581 (GAPP…PPSM). Residues 1599-1616 (GITALLGEITGGKTLRRV) enclose the WH2 domain. Basic and acidic residues predominate over residues 1614-1623 (RRVDDKDKKI).

This sequence belongs to the PAN1 family. Component of the PAN1 actin cytoskeleton-regulatory complex.

The protein resides in the cell membrane. The protein localises to the endosome membrane. It localises to the cytoplasm. It is found in the cytoskeleton. Its subcellular location is the actin patch. Component of the PAN1 actin cytoskeleton-regulatory complex required for the internalization of endosomes during actin-coupled endocytosis. The complex links the site of endocytosis to the cell membrane-associated actin cytoskeleton. Mediates uptake of external molecules and vacuolar degradation of plasma membrane proteins. Plays a role in the proper organization of the cell membrane-associated actin cytoskeleton and promotes its destabilization. In Yarrowia lipolytica (strain CLIB 122 / E 150) (Yeast), this protein is Actin cytoskeleton-regulatory complex protein PAN1 (PAN1).